The sequence spans 140 residues: MASPLRSLLFLLAVLAVAWAATPKQGPRMLGAPEEADANEEGVRRALDFAVSEYNKGSNDAYHSRAIQVVRARKQLVAGVNYFLDVEMGRTTCTKSQTNLTDCPFHDQPHLMRKALCSFQIYSVPWKGTHSLTKFSCKNA.

A signal peptide spans 1 to 20 (MASPLRSLLFLLAVLAVAWA). A Secondary area of contact motif is present at residues 75–79 (QLVAG). 2 disulfide bridges follow: cysteine 93–cysteine 103 and cysteine 117–cysteine 137.

It belongs to the cystatin family.

It is found in the secreted. Functionally, as an inhibitor of cysteine proteinases, this protein is thought to serve an important physiological role as a local regulator of this enzyme activity. The sequence is that of Cystatin-C (Cst3) from Mus musculus (Mouse).